A 757-amino-acid polypeptide reads, in one-letter code: 5-methyltetrahydropteroyltriglutamate--homocysteine methyltransferase (757 aa).

5-methyltetrahydropteroyltri-L-glutamate contacts are provided by residues 17-20 (RELK) and Lys-115. Residues 430 to 432 (IGS) and Glu-483 contribute to the L-homocysteine site. Residues 430–432 (IGS) and Glu-483 contribute to the L-methionine site. 5-methyltetrahydropteroyltri-L-glutamate is bound by residues 514-515 (RC) and Trp-560. Position 598 (Asp-598) interacts with L-homocysteine. Asp-598 contributes to the L-methionine binding site. Glu-604 contributes to the 5-methyltetrahydropteroyltri-L-glutamate binding site. Zn(2+) is bound by residues His-640, Cys-642, and Glu-664. The Proton donor role is filled by His-693. Cys-725 contributes to the Zn(2+) binding site.

It belongs to the vitamin-B12 independent methionine synthase family. Zn(2+) is required as a cofactor.

The catalysed reaction is 5-methyltetrahydropteroyltri-L-glutamate + L-homocysteine = tetrahydropteroyltri-L-glutamate + L-methionine. It participates in amino-acid biosynthesis; L-methionine biosynthesis via de novo pathway; L-methionine from L-homocysteine (MetE route): step 1/1. Catalyzes the transfer of a methyl group from 5-methyltetrahydrofolate to homocysteine resulting in methionine formation. In Buchnera aphidicola subsp. Schizaphis graminum (strain Sg), this protein is 5-methyltetrahydropteroyltriglutamate--homocysteine methyltransferase.